A 1047-amino-acid chain; its full sequence is MEKPGMSLLKGSLCVIVFLLLLSLVESVKGGGYVKYGTEAKVVPGKLNVHLVPHSHDDVGWLKTVDQYYVGSNNRIQNACVRNVLDSVVDSLLRDPNRKFVFAEMAFFTRWWEEQSPERQEQVRRLVKSGQLEFVNGGWAMNDEATCHYIDMIDQTTKGHRFIKQQFNTTPRAAWQIDPFGHSSVQAYLLGAELGLDSVHFARIDYQDREKRKAEKSLEVIWRGSKTLDSSSQIFTNIFFVHYGPPTGFHYEVTDDYVPLQDNPRFDGYNIKEAVNDFVNASLVYANVSRGNHVMWTMGDDFQYQFAESWFRQMDRLIHYVNKDGRVNALYSTPSLYVDAKNVANVTWPLKTHDFFPYADRAYAYWTGYFTSRPALKRYVRALSGYYMAARQLEFLVGKNSGGPNTYSLGDALGIAQHHDAVTGTAKQHVTNDYMKRLALGASEAEAVVNSALACLMNKAPKGGCTKPAIAFSQQCSLMNISYCPSTEETLPGQKSLILVAYNSLGWNRTEIIRIPVNDAGLSVEDSSGNTLDAQYIPMDNVTSNLRSFYTKAYLGISSLQRPKYWLVFKAKVPPLGWNTFFISKASAQGSNNHKHSSVMLSPMNNTTEIGPGNLKMVFSSDSGRLERMYNSRTGADIKVDQNYFWYASNVGDAKDPQVSGAYIFRPNGSLAYPVSSSKICTVTSAFIGNGNVQSKLQIVRGPLIDEVHQQFSPWVAQVVRLYKEKEHAEFEFTIGPISVGKGHLTGKEIITRMVTDMTTAKEFYTDSNGRDFLKRVRDNRTDWHLEVNEPIAGNYYPLNLGMYIKDEKAELSVLVDRATGGASIKDGEIELMLHRRTSMDDSRGVEESLVETVCVNDTCAGLTIRGNYYVSINKVGEGGRWRRETGQEIYSPLLMAFAHENKEKWKASNTVKGYAMDHLYTLPQNIALITLEELDLGNVLLRLAHLYEAGEDSDYSKIAKVELKKLFSGKMIKEVTEMSLSANQEKVKMKEKMKWKVEGEAEQPSSPLRGGPVDKSTLVVELGPMEIRTFVVQFYQKQRRRKLFVG.

An N-terminal signal peptide occupies residues Met-1 to Ser-27. Zn(2+) is bound by residues His-56, Asp-58, and Asp-178. N-linked (GlcNAc...) asparagine glycans are attached at residues Asn-280, Asn-287, and Asn-345. Residue His-419 participates in Zn(2+) binding. Disulfide bonds link Cys-455/Cys-465 and Cys-476/Cys-484. Asn-480, Asn-508, Asn-541, Asn-605, Asn-606, Asn-668, Asn-780, and Asn-857 each carry an N-linked (GlcNAc...) asparagine glycan. The cysteines at positions 855 and 860 are disulfide-linked.

Belongs to the glycosyl hydrolase 38 family. As to quaternary structure, homodimer. Zn(2+) is required as a cofactor.

The protein localises to the vacuole. It carries out the reaction Hydrolysis of terminal, non-reducing alpha-D-mannose residues in alpha-D-mannosides.. In terms of biological role, liberates mannose from p-nitrophenyl-alpha-D-mannoside in vitro. The protein is Probable alpha-mannosidase At5g66150 of Arabidopsis thaliana (Mouse-ear cress).